A 144-amino-acid polypeptide reads, in one-letter code: Putative pre-16S rRNA nuclease (144 aa).

Belongs to the YqgF nuclease family.

The protein localises to the cytoplasm. Functionally, could be a nuclease involved in processing of the 5'-end of pre-16S rRNA. The polypeptide is Putative pre-16S rRNA nuclease (Ralstonia nicotianae (strain ATCC BAA-1114 / GMI1000) (Ralstonia solanacearum)).